We begin with the raw amino-acid sequence, 428 residues long: MTATITDINAHEILDSRANPTLEVRVTLSSQAYGCAAVPSGASTGEREAVELRDNDLERYGGKGVLQAVENVNGPIRDALLGQDPRSQEEIDRIMIELDGTENKANLGANAILGVSLAVAYAAANNADLPLYRYLGGDGGPFSMPVPMMNIINGGAHATNNLDFQEFMIVPVGAPTFAEALRYGAEVFHALKKRLVSRGLMSAVGDEGGFAPDLPNNEAAFELILEAIEDANYVPGKDIYLALDAASSELYQNGRYDFENNQLTSEEMIDRLTEWTKKYPVISIEDGLSENDWAGWKLLTERLENKVQLVGDDIFVTNPDILEKGIKKNIANAILVKLNQIGTLTETLATVGLAKSNKYGVIISHRSGETEDTTIADLAVATDARQIKTGSLCRSDRVAKYNRLLQIERELNDQAPYAGKEAFLFNRK.

Position 165 (Q165) interacts with (2R)-2-phosphoglycerate. E207 (proton donor) is an active-site residue. 3 residues coordinate Mg(2+): D244, E285, and D312. (2R)-2-phosphoglycerate is bound by residues K337, R366, S367, and K388. K337 functions as the Proton acceptor in the catalytic mechanism.

This sequence belongs to the enolase family. As to quaternary structure, component of the RNA degradosome, a multiprotein complex involved in RNA processing and mRNA degradation. Mg(2+) is required as a cofactor.

The protein localises to the cytoplasm. Its subcellular location is the secreted. The protein resides in the cell surface. The catalysed reaction is (2R)-2-phosphoglycerate = phosphoenolpyruvate + H2O. It functions in the pathway carbohydrate degradation; glycolysis; pyruvate from D-glyceraldehyde 3-phosphate: step 4/5. In terms of biological role, catalyzes the reversible conversion of 2-phosphoglycerate (2-PG) into phosphoenolpyruvate (PEP). It is essential for the degradation of carbohydrates via glycolysis. This is Enolase from Coxiella burnetii (strain CbuK_Q154) (Coxiella burnetii (strain Q154)).